Consider the following 448-residue polypeptide: Asparagine--tRNA ligase (448 aa).

Belongs to the class-II aminoacyl-tRNA synthetase family. As to quaternary structure, homodimer.

It is found in the cytoplasm. It catalyses the reaction tRNA(Asn) + L-asparagine + ATP = L-asparaginyl-tRNA(Asn) + AMP + diphosphate + H(+). The protein is Asparagine--tRNA ligase of Streptococcus agalactiae serotype Ia (strain ATCC 27591 / A909 / CDC SS700).